Here is a 274-residue protein sequence, read N- to C-terminus: Thiamine kinase (274 aa).

This sequence belongs to the thiamine kinase family.

The catalysed reaction is thiamine + ATP = thiamine phosphate + ADP + H(+). It participates in cofactor biosynthesis; thiamine diphosphate biosynthesis; thiamine phosphate from thiamine: step 1/1. In terms of biological role, catalyzes the ATP-dependent phosphorylation of thiamine to thiamine phosphate. Is involved in thiamine salvage. The sequence is that of Thiamine kinase from Salmonella dublin (strain CT_02021853).